The following is a 382-amino-acid chain: LIM homeobox transcription factor 1-alpha (382 aa).

LIM zinc-binding domains follow at residues S33–V92 and V92–L154. 2 disordered regions span residues A161 to R208 and K252 to I286. A DNA-binding region (homeobox) is located at residues P195–A254. Residues R256–R269 show a composition bias toward low complexity.

The protein resides in the nucleus. Functionally, acts as a transcriptional activator by binding to an A/T-rich sequence, the FLAT element, in the insulin gene promoter. Required for development of the roof plate and, in turn, for specification of dorsal cell fates in the CNS and developing vertebrae. This Mus musculus (Mouse) protein is LIM homeobox transcription factor 1-alpha (Lmx1a).